The primary structure comprises 61 residues: Nakoroxin (61 aa).

4 disulfides stabilise this stretch: C3/C19, C12/C37, C41/C49, and C50/C55.

This sequence belongs to the three-finger toxin family. Short-chain subfamily. As to expression, expressed by the venom gland.

The protein localises to the secreted. Shows no cytotoxicity and does not inhibit the binding of alpha-bungarotoxin to nicotinic acetylcholine receptors of muscle and alpha-7/CHRNA7 types. However, it potentiates the binding of alpha-bungarotoxin to the acetylcholine-binding protein from Lymnaea stagnalis. The polypeptide is Nakoroxin (Naja kaouthia (Monocled cobra)).